Consider the following 805-residue polypeptide: Leucine--tRNA ligase (805 aa).

Positions 39–50 match the 'HIGH' region motif; sequence PYPSGKGLHVGH. The 'KMSKS' region motif lies at 583–587; sequence KMSKS. Lys-586 is an ATP binding site.

This sequence belongs to the class-I aminoacyl-tRNA synthetase family.

Its subcellular location is the cytoplasm. The catalysed reaction is tRNA(Leu) + L-leucine + ATP = L-leucyl-tRNA(Leu) + AMP + diphosphate. This Mycoplasmoides gallisepticum (strain R(low / passage 15 / clone 2)) (Mycoplasma gallisepticum) protein is Leucine--tRNA ligase.